A 493-amino-acid chain; its full sequence is Glutamate synthase [NADPH] small chain (493 aa).

An NADP(+)-binding site is contributed by 299-313 (GGGDTGADCVATALR).

The protein belongs to the glutamate synthase family. In terms of assembly, aggregate of 4 catalytic active heterodimers, consisting of a large and a small subunit.

The enzyme catalyses 2 L-glutamate + NADP(+) = L-glutamine + 2-oxoglutarate + NADPH + H(+). Its pathway is amino-acid biosynthesis; L-glutamate biosynthesis via GLT pathway; L-glutamate from 2-oxoglutarate and L-glutamine (NADP(+) route): step 1/1. It functions in the pathway energy metabolism; nitrogen metabolism. The sequence is that of Glutamate synthase [NADPH] small chain (gltB) from Bacillus subtilis (strain 168).